The sequence spans 558 residues: Dihydroxy-acid dehydratase (558 aa).

C50 serves as a coordination point for [2Fe-2S] cluster. A Mg(2+)-binding site is contributed by D82. C123 contributes to the [2Fe-2S] cluster binding site. Mg(2+) is bound by residues D124 and K125. Position 125 is an N6-carboxylysine (K125). C195 is a binding site for [2Fe-2S] cluster. E447 provides a ligand contact to Mg(2+). The active-site Proton acceptor is S472.

Belongs to the IlvD/Edd family. As to quaternary structure, homodimer. It depends on [2Fe-2S] cluster as a cofactor. Mg(2+) is required as a cofactor.

It carries out the reaction (2R)-2,3-dihydroxy-3-methylbutanoate = 3-methyl-2-oxobutanoate + H2O. It catalyses the reaction (2R,3R)-2,3-dihydroxy-3-methylpentanoate = (S)-3-methyl-2-oxopentanoate + H2O. It functions in the pathway amino-acid biosynthesis; L-isoleucine biosynthesis; L-isoleucine from 2-oxobutanoate: step 3/4. Its pathway is amino-acid biosynthesis; L-valine biosynthesis; L-valine from pyruvate: step 3/4. Its function is as follows. Functions in the biosynthesis of branched-chain amino acids. Catalyzes the dehydration of (2R,3R)-2,3-dihydroxy-3-methylpentanoate (2,3-dihydroxy-3-methylvalerate) into 2-oxo-3-methylpentanoate (2-oxo-3-methylvalerate) and of (2R)-2,3-dihydroxy-3-methylbutanoate (2,3-dihydroxyisovalerate) into 2-oxo-3-methylbutanoate (2-oxoisovalerate), the penultimate precursor to L-isoleucine and L-valine, respectively. The sequence is that of Dihydroxy-acid dehydratase from Saccharolobus islandicus (strain Y.N.15.51 / Yellowstone #2) (Sulfolobus islandicus).